The chain runs to 100 residues: Replication restart protein PriB (100 aa).

Residues 4–99 (TNLVSLAALI…LRIQNIKEYK (96 aa)) form the SSB domain.

The protein belongs to the PriB family. In terms of assembly, homodimer. Component of the replication restart primosome. Primosome assembly occurs via a 'hand-off' mechanism. PriA binds to replication forks, subsequently PriB then DnaT bind; DnaT then displaces ssDNA to generate the helicase loading substrate. Interacts with PriA with high affinity, independent of DNA presence.

Its activity is regulated as follows. PriA:PriB complex-catalyzed duplex DNA winding is inhibited by CGS 15943 (CHEBI:131351); PriA is the drug target. Its function is as follows. Stimulates the DNA unwinding activity of PriA helicase, which does not seem to require single-stranded (ss)DNA-binding by PriB. Activates DNA-dependent ATP hydrolysis catalyzed by PriA. Weakly binds ssDNA. Weakly binds double-stranded (ds)DNA, a partial duplex DNA with a 3' ssDNA overhang, and a forked DNA structure with fully duplex leading and lagging strand arms in vitro. Functionally, involved in the restart of stalled replication forks, which reloads the replicative helicase on sites other than the origin of replication; the PriA-PriB pathway is the major replication restart pathway. During primosome assembly it facilitates complex formation between PriA and DnaT on DNA; stabilizes PriA on DNA. Stimulates the DNA unwinding activity of PriA helicase. This is Replication restart protein PriB from Neisseria gonorrhoeae (strain ATCC 700825 / FA 1090).